Consider the following 156-residue polypeptide: Endoribonuclease YbeY (156 aa).

His105, His109, and Asp115 together coordinate Zn(2+).

This sequence belongs to the endoribonuclease YbeY family. Zn(2+) is required as a cofactor.

Its subcellular location is the cytoplasm. Single strand-specific metallo-endoribonuclease involved in late-stage 70S ribosome quality control and in maturation of the 3' terminus of the 16S rRNA. The polypeptide is Endoribonuclease YbeY (Chlorobium chlorochromatii (strain CaD3)).